A 72-amino-acid chain; its full sequence is Protein kish-A (72 aa).

Positions 1-26 are cleaved as a signal peptide; sequence MSAIFNFQSLLTVILLLICTCAYIRS. Residues 27–53 are Extracellular-facing; the sequence is LAPSILDRNKTGLLGIFWKCARIGERK. N-linked (GlcNAc...) asparagine glycosylation occurs at Asn35. The chain crosses the membrane as a helical span at residues 54–71; that stretch reads SPYVAICCIVMAFSILFI. A topological domain (cytoplasmic) is located at residue Gln72.

This sequence belongs to the KISH family.

The protein resides in the golgi apparatus membrane. Functionally, involved in the early part of the secretory pathway. This Mus musculus (Mouse) protein is Protein kish-A (Tmem167a).